Consider the following 525-residue polypeptide: ATP-dependent RNA helicase dbp8 (525 aa).

Residues 1-29 are compositionally biased toward polar residues; that stretch reads MAPLSTPESISREISVSSDASADESTSLD. Residues 1-76 form a disordered region; the sequence is MAPLSTPESI…TNATSSRKDD (76 aa). A Q motif motif is present at residues 95 to 123; the sequence is NSFKALNVAPWLVGSLTTMAVRKPTAIQR. The Helicase ATP-binding domain occupies 126–305; it reads IPEILKGRDC…SMPQTPGKPP (180 aa). 139-146 contacts ATP; that stretch reads SRTGSGKT. The DEAD box signature appears at 248–251; sequence DEAD. Residues 337–484 form the Helicase C-terminal domain; it reads AFLHVLLSTE…EYEEEGVNLE (148 aa).

This sequence belongs to the DEAD box helicase family. DDX49/DBP8 subfamily.

Its subcellular location is the nucleus. It is found in the nucleolus. It catalyses the reaction ATP + H2O = ADP + phosphate + H(+). ATP-binding RNA helicase involved in 40S ribosomal subunit biogenesis and is required for the normal formation of 18S rRNAs through pre-rRNA processing at A0, A1 and A2 sites. Required for vegetative growth. This chain is ATP-dependent RNA helicase dbp8 (dbp8), found in Emericella nidulans (strain FGSC A4 / ATCC 38163 / CBS 112.46 / NRRL 194 / M139) (Aspergillus nidulans).